Reading from the N-terminus, the 391-residue chain is Phosphoglycerate kinase (391 aa).

Substrate-binding positions include 21–23 (DLN), R36, 59–62 (HLGR), R113, and R146. ATP contacts are provided by residues K197, E319, and 345–348 (GGDT).

It belongs to the phosphoglycerate kinase family. As to quaternary structure, monomer.

It localises to the cytoplasm. The catalysed reaction is (2R)-3-phosphoglycerate + ATP = (2R)-3-phospho-glyceroyl phosphate + ADP. It participates in carbohydrate degradation; glycolysis; pyruvate from D-glyceraldehyde 3-phosphate: step 2/5. This is Phosphoglycerate kinase from Xylella fastidiosa (strain 9a5c).